A 457-amino-acid chain; its full sequence is tRNA(Ile)-lysidine synthase (457 aa).

ATP is bound at residue 27-32; the sequence is SGGLDS.

Belongs to the tRNA(Ile)-lysidine synthase family.

Its subcellular location is the cytoplasm. It carries out the reaction cytidine(34) in tRNA(Ile2) + L-lysine + ATP = lysidine(34) in tRNA(Ile2) + AMP + diphosphate + H(+). Ligates lysine onto the cytidine present at position 34 of the AUA codon-specific tRNA(Ile) that contains the anticodon CAU, in an ATP-dependent manner. Cytidine is converted to lysidine, thus changing the amino acid specificity of the tRNA from methionine to isoleucine. The polypeptide is tRNA(Ile)-lysidine synthase (Hamiltonella defensa subsp. Acyrthosiphon pisum (strain 5AT)).